An 857-amino-acid chain; its full sequence is MTRRRVLSVVVLLAALACRLGAQTPEQPAPPATTVQPTATRQQTSFPFRVCELSSHGDLFRFSSDIQCPSFGTRENHTEGLLMVFKDNIIPYSFKVRSYTKIVTNILIYNGWYADSVTNRHEEKFSVDSYETDQMDTIYQCYNAVKMTKDGLTRVYVDRDGVNITVNLKPTGGLANGVRRYASQTELYDAPGWLIWTYRTRTTVNCLITDMMAKSNSPFDFFVTTTGQTVEMSPFYDGKNKETFHERADSFHVRTNYKIVDYDNRGTNPQGERRAFLDKGTYTLSWKLENRTAYCPLQHWQTFDSTIATETGKSIHFVTDEGTSSFVTNTTVGIELPDAFKCIEEQVNKTMHEKYEAVQDRYTKGQEAITYFITSGGLLLAWLPLTPRSLATVKNLTELTTPTSSPPSSPSPPAPSAARGSTPAAVLRRRRRDAGNATTPVPPTAPGKSLGTLNNPATVQIQFAYDSLRRQINRMLGDLARAWCLEQKRQNMVLRELTKINPTTVMSSIYGKAVAAKRLGDVISVSQCVPVNQATVTLRKSMRVPGSETMCYSRPLVSFSFINDTKTYEGQLGTDNEIFLTKKMTEVCQATSQYYFQSGNEIHVYNDYHHFKTIELDGIATLQTFISLNTSLIENIDFASLELYSRDEQRASNVFDLEGIFREYNFQAQNIAGLRKDLDNAVSNGRNQFVDGLGELMDSLGSVGQSITNLVSTVGGLFSSLVSGFISFFKNPFGGMLILVLVAGVVILVISLTRRTRQMSQQPVQMLYPGIDELAQQHASGEGPGINPISKTELQAIMLALHEQNQEQKRAAQRAAGPSVASRALQAARDRFPGLRRRRYHDPETAAALLGEAETEF.

The N-terminal stretch at 1-21 is a signal peptide; it reads MTRRRVLSVVVLLAALACRLG. Over 22–732 the chain is Virion surface; that stretch reads AQTPEQPAPP…SGFISFFKNP (711 aa). Cystine bridges form between Cys51–Cys528, Cys68–Cys484, Cys141–Cys206, Cys295–Cys342, and Cys551–Cys588. N-linked (GlcNAc...) asparagine; by host glycosylation occurs at Asn76. Residues 108 to 114 form an involved in fusion and/or binding to host membrane region; that stretch reads IYNGWYA. The N-linked (GlcNAc...) asparagine; by host glycan is linked to Asn163. The involved in fusion and/or binding to host membrane stretch occupies residues 192–200; that stretch reads GWLIWTYRT. 4 N-linked (GlcNAc...) asparagine; by host glycosylation sites follow: Asn290, Asn329, Asn348, and Asn395. Residues 398 to 453 form a disordered region; that stretch reads ELTTPTSSPPSSPSPPAPSAARGSTPAAVLRRRRRDAGNATTPVPPTAPGKSLGTL. Pro residues predominate over residues 404-415; the sequence is SSPPSSPSPPAP. Residues 416-425 show a composition bias toward low complexity; the sequence is SAARGSTPAA. N-linked (GlcNAc...) asparagine; by host glycans are attached at residues Asn436, Asn563, and Asn629. The oligomerization stretch occupies residues 561–620; it reads FINDTKTYEGQLGTDNEIFLTKKMTEVCQATSQYYFQSGNEIHVYNDYHHFKTIELDGIA. 2 hydrophobic membrane proximal region regions span residues 678-730 and 709-729; these read LDNA…SFFK and NLVS…ISFF. Residues 733 to 753 form a helical membrane-spanning segment; the sequence is FGGMLILVLVAGVVILVISLT. The Intravirion segment spans residues 754–857; the sequence is RRTRQMSQQP…ALLGEAETEF (104 aa). The segment at 832-857 is disordered; the sequence is FPGLRRRRYHDPETAAALLGEAETEF. Low complexity predominate over residues 845–857; it reads TAAALLGEAETEF.

It belongs to the herpesviridae glycoprotein B family. Homotrimer; disulfide-linked. Binds to heparan sulfate proteoglycans. Interacts with gH/gL heterodimer. In terms of processing, a proteolytic cleavage by host furin generates two subunits that remain linked by disulfide bonds.

The protein localises to the virion membrane. Its subcellular location is the host cell membrane. The protein resides in the host endosome membrane. It localises to the host Golgi apparatus membrane. Envelope glycoprotein that forms spikes at the surface of virion envelope. Essential for the initial attachment to heparan sulfate moieties of the host cell surface proteoglycans. Involved in fusion of viral and cellular membranes leading to virus entry into the host cell. Following initial binding to its host receptors, membrane fusion is mediated by the fusion machinery composed at least of gB and the heterodimer gH/gL. May be involved in the fusion between the virion envelope and the outer nuclear membrane during virion egress. The sequence is that of Envelope glycoprotein B from Epstein-Barr virus (strain B95-8) (HHV-4).